The following is a 313-amino-acid chain: Porphobilinogen deaminase (313 aa).

S-(dipyrrolylmethanemethyl)cysteine is present on Cys-241.

This sequence belongs to the HMBS family. Monomer. Dipyrromethane serves as cofactor.

It catalyses the reaction 4 porphobilinogen + H2O = hydroxymethylbilane + 4 NH4(+). The protein operates within porphyrin-containing compound metabolism; protoporphyrin-IX biosynthesis; coproporphyrinogen-III from 5-aminolevulinate: step 2/4. Tetrapolymerization of the monopyrrole PBG into the hydroxymethylbilane pre-uroporphyrinogen in several discrete steps. The protein is Porphobilinogen deaminase of Idiomarina loihiensis (strain ATCC BAA-735 / DSM 15497 / L2-TR).